Reading from the N-terminus, the 995-residue chain is Pheromone-regulated membrane protein 10 (995 aa).

Disordered stretches follow at residues 1 to 217, 253 to 299, 326 to 407, and 425 to 508; these read MSSH…GEKH, GRVL…AVEM, DQSF…YIAP, and NPQD…NPDQ. The span at 74–88 shows a compositional bias: low complexity; that stretch reads SNSSTTNNSTESSGS. Positions 110–121 are enriched in basic and acidic residues; the sequence is VKGESGDAHEGS. Over residues 157–166 the composition is skewed to low complexity; it reads SRGSVGSSSS. A compositionally biased stretch (basic and acidic residues) spans 170–187; sequence KGSDDVNEKETNLDHDYD. Over residues 259–269 the composition is skewed to gly residues; it reads GSGGGGGGGLI. Acidic residues predominate over residues 283 to 296; sequence EEKEVGGGGEDDGA. Positions 326 to 347 are enriched in polar residues; sequence DQSFTYDEPNQSAGSSRNSTAP. Composition is skewed to basic and acidic residues over residues 359-371 and 385-396; these read DDHK…DQGK and GNDDPEDQHLLL. Positions 495–506 are enriched in acidic residues; sequence EADDEDEDEENP. Helical transmembrane passes span 678–698, 700–720, 726–746, 752–772, 794–814, 833–850, 858–878, 881–901, 906–926, and 965–985; these read VFLY…GGWL, IPVT…VSSM, SVFE…IGSI, FCFS…YIIL, IIYS…FGWV, KYRI…GLIN, PVMM…GKHF, VPEF…NVYS, GMAV…GIAS, and VEVS…VYPF.

It belongs to the ThrE exporter (TC 2.A.79) family.

Its subcellular location is the membrane. The polypeptide is Pheromone-regulated membrane protein 10 (Pichia sorbitophila (strain ATCC MYA-4447 / BCRC 22081 / CBS 7064 / NBRC 10061 / NRRL Y-12695) (Hybrid yeast)).